Reading from the N-terminus, the 346-residue chain is Glycosyltransferase 1 domain-containing protein 1 (346 aa).

Residues 1–16 (MRLLFLAVLRPHTGNA) form the signal peptide.

It belongs to the glycosyltransferase group 1 family. Glycosyltransferase 4 subfamily.

The protein localises to the secreted. The sequence is that of Glycosyltransferase 1 domain-containing protein 1 (GLT1D1) from Pongo abelii (Sumatran orangutan).